Consider the following 365-residue polypeptide: Phospho-N-acetylmuramoyl-pentapeptide-transferase (365 aa).

9 helical membrane passes run 47 to 67 (LLAL…VVPL), 92 to 112 (PTMG…ILAG), 114 to 134 (SPLV…GWLD), 153 to 173 (LCLQ…QQGW), 180 to 200 (ITLP…LAVF), 215 to 235 (LDGL…LWLA), 239 to 259 (PAIA…LLHN), 281 to 301 (AIAI…LFVL), and 344 to 364 (TQVV…CWLL).

The protein belongs to the glycosyltransferase 4 family. MraY subfamily. The cofactor is Mg(2+).

It localises to the cell inner membrane. The enzyme catalyses UDP-N-acetyl-alpha-D-muramoyl-L-alanyl-gamma-D-glutamyl-meso-2,6-diaminopimeloyl-D-alanyl-D-alanine + di-trans,octa-cis-undecaprenyl phosphate = di-trans,octa-cis-undecaprenyl diphospho-N-acetyl-alpha-D-muramoyl-L-alanyl-D-glutamyl-meso-2,6-diaminopimeloyl-D-alanyl-D-alanine + UMP. The protein operates within cell wall biogenesis; peptidoglycan biosynthesis. Functionally, catalyzes the initial step of the lipid cycle reactions in the biosynthesis of the cell wall peptidoglycan: transfers peptidoglycan precursor phospho-MurNAc-pentapeptide from UDP-MurNAc-pentapeptide onto the lipid carrier undecaprenyl phosphate, yielding undecaprenyl-pyrophosphoryl-MurNAc-pentapeptide, known as lipid I. The protein is Phospho-N-acetylmuramoyl-pentapeptide-transferase of Synechococcus elongatus (strain ATCC 33912 / PCC 7942 / FACHB-805) (Anacystis nidulans R2).